The chain runs to 1941 residues: Myosin light chain kinase, smooth muscle (1941 aa).

Ig-like C2-type domains are found at residues 33–122 (PAFI…VELT) and 156–244 (PKFA…AELS). The cysteines at positions 177 and 228 are disulfide-linked. Tyr226 is subject to Phosphotyrosine; by ABL1. The tract at residues 255-329 (AVRGTKAPSP…RKVPQSSILQ (75 aa)) is disordered. Residues 286–305 (NCPSPQRSGSSARATNSHLK) are compositionally biased toward polar residues. Ser295 carries the phosphoserine modification. The segment covering 306 to 320 (SPQEPKPKLCEDAPR) has biased composition (basic and acidic residues). Ser333 and Ser355 each carry phosphoserine. Ig-like C2-type domains follow at residues 402–485 (PRFE…GQVS), 502–587 (PSFS…ATVT), 611–699 (PIFL…AVLT), and 709–809 (PWFI…APPR). Cystine bridges form between Cys423–Cys475 and Cys523–Cys571. Tyr452 carries the phosphotyrosine; by ABL1 and SRC modification. Cys730 and Cys793 are joined by a disulfide. Tyr780 bears the Phosphotyrosine; by ABL1 mark. 4 consecutive repeat copies span residues 856 to 883 (DVRGLLKRRVETRLHTEEAIRQQEVGQL), 884 to 911 (DFRDLLGKKVSTKTVSEDDLKDIPAEQM), 912 to 939 (DFRANLQRQVKPKTISEEERKVHSPQQV), and 940 to 966 (DFRSVLAKKGTPKTPVPEKAPPKAATP). The tract at residues 856–985 (DVRGLLKRRV…KKSPSENGGN (130 aa)) is 5 X 28 AA approximate tandem repeats. Positions 911–951 (MDFRANLQRQVKPKTISEEERKVHSPQQVDFRSVLAKKGTP) are actin-binding (calcium/calmodulin-sensitive). Residues 920 to 1120 (QVKPKTISEE…KRPESQGSAP (201 aa)) are disordered. Residue Ser935 is modified to Phosphoserine. The segment at 936 to 951 (PQQVDFRSVLAKKGTP) is calmodulin-binding. A 1-5; truncated repeat occupies 967 to 985 (DFRSVLGGKKKSPSENGGN). Tandem repeats lie at residues 990–1002 (LNVKAGESPTPAG), 1003–1014 (DAQAIGALKPVG), 1015–1026 (NAKPAETPKPIG), 1027–1038 (NAKPTETLKPVG), and 1039–1049 (NTKPAETLKPI). The 5 X 12 AA approximate tandem repeats stretch occupies residues 990–1049 (LNVKAGESPTPAGDAQAIGALKPVGNAKPAETPKPIGNAKPTETLKPVGNTKPAETLKPI). Positions 1048–1482 (PIANAQPSGS…TVTVNTEQKV (435 aa)) are actin-binding (calcium/calmodulin-insensitive). Over residues 1052-1065 (AQPSGSLKPVTNAQ) the composition is skewed to polar residues. The segment covering 1085-1099 (AGKEEVKEVKNDVNC) has biased composition (basic and acidic residues). In terms of domain architecture, Ig-like C2-type 7 spans 1120–1208 (PVFKEKLQDV…GQAECSCQVT (89 aa)). Cys1141 and Cys1192 are disulfide-bonded. The interval 1212-1257 (AQTSENTKAPEMKSRRPKSSLPPVLGTESDATVKKKPAPKTPTKAA) is disordered. The region spanning 1260–1348 (PQIIQFPEDQ…GSRQAQVNLT (89 aa)) is the Ig-like C2-type 8 domain. Positions 1356–1449 (PAGTPCASDI…ESELTAVGEK (94 aa)) constitute a Fibronectin type-III domain. The disordered stretch occupies residues 1435–1469 (SEPSQESELTAVGEKPEEPKDEVEVSDDDEKEPEV). The span at 1453–1467 (PKDEVEVSDDDEKEP) shows a compositional bias: acidic residues. Ser1460 carries the phosphoserine modification. The residue at position 1471 (Tyr1471) is a Phosphotyrosine; by ABL1. Positions 1486–1741 (YDIEERLGSG…CTQCLQHPWL (256 aa)) constitute a Protein kinase domain. Residues 1492 to 1500 (LGSGKFGQV) and Lys1515 contribute to the ATP site. Tyr1597 is subject to Phosphotyrosine; by ABL1. Catalysis depends on Asp1607, which acts as the Proton acceptor. Residue Tyr1657 is modified to Phosphotyrosine; by ABL1. The interval 1733-1796 (TQCLQHPWLM…SGLSGRKSST (64 aa)) is calmodulin-binding. 5 positions are modified to phosphoserine: Ser1781, Ser1782, Ser1794, Ser1795, and Ser1798. A disordered region spans residues 1789–1809 (LSGRKSSTGSPTSPINAEKLE). Residues 1792 to 1803 (RKSSTGSPTSPI) are compositionally biased toward polar residues. The residue at position 1800 (Thr1800) is a Phosphothreonine. Ser1801 is subject to Phosphoserine. Residues 1831 to 1920 (PYFSKTIRDL…GEATCTAELI (90 aa)) enclose the Ig-like C2-type 9 domain. Cys1852 and Cys1904 form a disulfide bridge.

The protein belongs to the protein kinase superfamily. CAMK Ser/Thr protein kinase family. All isoforms including Telokin bind calmodulin. Interacts with CTTN; this interaction is reduced during thrombin-induced endothelial cell (EC) contraction but is promoted by the barrier-protective agonist sphingosine 1-phosphate (S1P) within lamellipodia. A complex made of ABL1, CTTN and MYLK regulates cortical actin-based cytoskeletal rearrangement critical to sphingosine 1-phosphate (S1P)-mediated endothelial cell (EC) barrier enhancement. Binds to NAA10/ARD1. Interacts with SVIL and PTK2B/PYK2. The cofactor is Mg(2+). It depends on Ca(2+) as a cofactor. Post-translationally, can probably be down-regulated by phosphorylation. Tyrosine phosphorylation by ABL1 increases kinase activity, reverses MLCK-mediated inhibition of Arp2/3-mediated actin polymerization, and enhances CTTN-binding. Phosphorylation by SRC at Tyr-452 promotes CTTN binding. In terms of processing, the C-terminus is deglutamylated by AGTPBP1/CCP1, AGBL1/CCP4 and AGBL4/CCP6, leading to the formation of Myosin light chain kinase, smooth muscle, deglutamylated form. The consequences of C-terminal deglutamylation are unknown. As to expression, smooth muscle isoform is expressed in all tissues with highest levels in bladder, uterus, vas deferens, colon, ileum, and tracheae. Isoform 1 is expressed in lung, bladder, and vas deferens. Telokin is expressed in smooth muscle cells of the gut, reproductive tract and urinary tract, including in uterus, vas deferens, bladder, colon, kidney, ureter and ovary. Telokin is also detected in the trachea.

It is found in the cytoplasm. It localises to the cell projection. The protein resides in the lamellipodium. The protein localises to the cleavage furrow. Its subcellular location is the cytoskeleton. It is found in the stress fiber. The enzyme catalyses L-seryl-[myosin light chain] + ATP = O-phospho-L-seryl-[myosin light chain] + ADP + H(+). The catalysed reaction is L-threonyl-[myosin light chain] + ATP = O-phospho-L-threonyl-[myosin light chain] + ADP + H(+). Functionally, calcium/calmodulin-dependent myosin light chain kinase implicated in smooth muscle contraction via phosphorylation of myosin light chains (MLC). Also regulates actin-myosin interaction through a non-kinase activity. Phosphorylates PTK2B/PYK2 and myosin light-chains. Involved in the inflammatory response (e.g. apoptosis, vascular permeability, leukocyte diapedesis), cell motility and morphology, airway hyperreactivity and other activities relevant to asthma. Required for tonic airway smooth muscle contraction that is necessary for physiological and asthmatic airway resistance. Necessary for gastrointestinal motility. Implicated in the regulation of endothelial as well as vascular permeability, probably via the regulation of cytoskeletal rearrangements. In the nervous system it has been shown to control the growth initiation of astrocytic processes in culture and to participate in transmitter release at synapses formed between cultured sympathetic ganglion cells. Critical participant in signaling sequences that result in fibroblast apoptosis. Plays a role in the regulation of epithelial cell survival. Required for epithelial wound healing, especially during actomyosin ring contraction during purse-string wound closure. Mediates RhoA-dependent membrane blebbing. Triggers TRPC5 channel activity in a calcium-dependent signaling, by inducing its subcellular localization at the plasma membrane. Promotes cell migration (including tumor cells) and tumor metastasis. PTK2B/PYK2 activation by phosphorylation mediates ITGB2 activation and is thus essential to trigger neutrophil transmigration during acute lung injury (ALI). May regulate optic nerve head astrocyte migration. Probably involved in mitotic cytoskeletal regulation. Regulates tight junction probably by modulating ZO-1 exchange in the perijunctional actomyosin ring. Mediates burn-induced microvascular barrier injury; triggers endothelial contraction in the development of microvascular hyperpermeability by phosphorylating MLC. Essential for intestinal barrier dysfunction. Mediates Giardia spp.-mediated reduced epithelial barrier function during giardiasis intestinal infection via reorganization of cytoskeletal F-actin and tight junctional ZO-1. Necessary for hypotonicity-induced Ca(2+) entry and subsequent activation of volume-sensitive organic osmolyte/anion channels (VSOAC) in cervical cancer cells. This is Myosin light chain kinase, smooth muscle from Mus musculus (Mouse).